Here is a 407-residue protein sequence, read N- to C-terminus: MLSFTSVFSFFLHALLLKTAFSYVIKRNNPVFDYTSEKVRGVNIGGWLVLENWITPQLFTQFSSMSNPPTDEWGFCEVLGADEAASQLAAHYSSFYTESDFATIASWGVNVLRIPIGYWAFNVVDGEPYVQGQEYWLDQALTWAEQYGLKVWIDLHGVPGSQNGFENSGKTGSIGWQQNDTVTRTLDIITYVANKYTQSQYASVVIGIETVNEPLGYGLDMDQLKQYDLDAYNIVNPLSSSVATIIHDAYVDLSIWDYGVVSPSSYNLVMDVHRYQLYESDECSKTLDDHLSDVCSIGDSIASSPYITVTGEWSGTLADCTIFEEGVDSSTFIGPNSGDISTWTDEYKGAVRLFIETQLDQFERGAGWIYWTAKTGGPSPTWDMGLLIEYGVFPQPFTDRQYSSYCG.

An N-terminal signal peptide occupies residues 1–22 (MLSFTSVFSFFLHALLLKTAFS). E213 functions as the Proton donor in the catalytic mechanism. Cysteines 295 and 406 form a disulfide. Residue E312 is the Nucleophile of the active site.

Belongs to the glycosyl hydrolase 5 (cellulase A) family.

Its subcellular location is the secreted. It catalyses the reaction Successive hydrolysis of beta-D-glucose units from the non-reducing ends of (1-&gt;3)-beta-D-glucans, releasing alpha-glucose.. Its function is as follows. Beta-glucanases participate in the metabolism of beta-glucan, the main structural component of the cell wall. It could also function biosynthetically as a transglycosylase. In Schizosaccharomyces pombe (strain 972 / ATCC 24843) (Fission yeast), this protein is Glucan 1,3-beta-glucosidase 1 (exg1).